A 190-amino-acid polypeptide reads, in one-letter code: Prostaglandin-H2 D-isomerase (190 aa).

Residues 1-22 form the signal peptide; the sequence is MATHHTLWMGLALLGVLGDLQA. Asn51 is a glycosylation site (N-linked (GlcNAc...) asparagine). The Nucleophile role is filled by Cys65. An N-linked (GlcNAc...) asparagine glycan is attached at Asn78. A disulfide bridge connects residues Cys89 and Cys186.

Belongs to the calycin superfamily. Lipocalin family. Monomer.

Its subcellular location is the rough endoplasmic reticulum. The protein localises to the nucleus membrane. It localises to the golgi apparatus. The protein resides in the cytoplasm. It is found in the perinuclear region. Its subcellular location is the secreted. It catalyses the reaction prostaglandin H2 = prostaglandin D2. In terms of biological role, catalyzes the conversion of PGH2 to PGD2, a prostaglandin involved in smooth muscle contraction/relaxation and a potent inhibitor of platelet aggregation. Involved in a variety of CNS functions, such as sedation, NREM sleep and PGE2-induced allodynia, and may have an anti-apoptotic role in oligodendrocytes. Binds small non-substrate lipophilic molecules, including biliverdin, bilirubin, retinal, retinoic acid and thyroid hormone, and may act as a scavenger for harmful hydrophobic molecules and as a secretory retinoid and thyroid hormone transporter. Possibly involved in development and maintenance of the blood-brain, blood-retina, blood-aqueous humor and blood-testis barrier. It is likely to play important roles in both maturation and maintenance of the central nervous system and male reproductive system. Involved in PLA2G3-dependent maturation of mast cells. PLA2G3 is secreted by immature mast cells and acts on nearby fibroblasts upstream to PTDGS to synthesize PGD2, which in turn promotes mast cell maturation and degranulation via PTGDR. The polypeptide is Prostaglandin-H2 D-isomerase (PTGDS) (Gorilla gorilla gorilla (Western lowland gorilla)).